Here is a 486-residue protein sequence, read N- to C-terminus: Protein kinase C and casein kinase substrate in neurons protein 2 (486 aa).

The F-BAR domain occupies 11-282 (VEVSSDSFWE…SIKAADAVED (272 aa)). The stretch at 25 to 274 (KRTVKRIDDG…TIYRELEQSI (250 aa)) forms a coiled coil. The residue at position 53 (Lys53) is an N6-acetyllysine. Position 273 is a phosphoserine (Ser273). Ser313 bears the Phosphoserine; by PKC mark. A disordered region spans residues 315 to 426 (REKKKAVDGV…NPFDEDTTSG (112 aa)). A compositionally biased stretch (polar residues) spans 327–362 (TGINQTGDQSGQNKPGSNLSVPSNPAQSTQLQSSYN). The short motif at 362 to 364 (NPF) is the NPF1 element. Ser373 is subject to Phosphoserine; by IKKB. The segment covering 384-396 (NVSSYEKTQTYPT) has biased composition (polar residues). Residue Ser399 is modified to Phosphoserine. Polar residues predominate over residues 404–416 (NNPFSSTDANGDS). An NPF2 motif is present at residues 405–407 (NPF). An NPF3 motif is present at residues 417–419 (NPF). An SH3 domain is found at 426-486 (GTEVRVRALY…YPANYVEAIQ (61 aa)). Ser446 is modified (phosphoserine).

Belongs to the PACSIN family. In terms of assembly, homodimer. May form heterooligomers with other PACSINs. Interacts (via NPF motifs) with EHD1 (via EH domain). Interacts (via NPF motifs) with EHD2 (via EH domain); this interaction probably stabilizes the caveolae. Interacts with EHD3. Interacts (via the SH3 domain) with MICALL1. Interacts with RAC1. Interacts (via SH3 domain) with DNM1, SYN1, SYNJ1 and WASL. Interacts (via F-BAR domain) with CAV1; this interaction induces membrane tubulation. Interacts with TRPV4. Forms a complex with EHD4 and MICALL1; the complex controls CDH5 trafficking and coordinates angiogenesis. Phosphorylated by casein kinase 2 (CK2). Phosphorylation by PKC probably decreases the membrane binding and tubulation capacities of PACSIN2, thereby modulating the lifetime of caveolae. As to expression, widely expressed (at protein level).

It localises to the cytoplasm. The protein resides in the cytoskeleton. The protein localises to the cytoplasmic vesicle membrane. Its subcellular location is the cell projection. It is found in the ruffle membrane. It localises to the early endosome. The protein resides in the recycling endosome membrane. The protein localises to the cell membrane. Its subcellular location is the membrane. It is found in the caveola. It localises to the cell junction. The protein resides in the adherens junction. In terms of biological role, regulates the morphogenesis and endocytosis of caveolae. Lipid-binding protein that is able to promote the tubulation of the phosphatidic acid-containing membranes it preferentially binds. Plays a role in intracellular vesicle-mediated transport. Involved in the endocytosis of cell-surface receptors like the EGF receptor, contributing to its internalization in the absence of EGF stimulus. Essential for endothelial organization in sprouting angiogenesis, modulates CDH5-based junctions. Facilitates endothelial front-rear polarity during migration by recruiting EHD4 and MICALL1 to asymmetric adherens junctions between leader and follower cells. In Mus musculus (Mouse), this protein is Protein kinase C and casein kinase substrate in neurons protein 2 (Pacsin2).